We begin with the raw amino-acid sequence, 601 residues long: Aspartate--tRNA(Asp/Asn) ligase (601 aa).

Glu177 lines the L-aspartate pocket. The tract at residues 201-204 (QLFK) is aspartate. Arg223 is an L-aspartate binding site. Residues 223–225 (RDE) and Gln232 contribute to the ATP site. His455 is a binding site for L-aspartate. ATP is bound at residue Glu489. Arg496 contacts L-aspartate. Residue 541 to 544 (GWDR) coordinates ATP. Residues 568–601 (VDPLTDAPAPIPLEQRRETGVDFKPKKKTDESAV) are disordered. Positions 581–601 (EQRRETGVDFKPKKKTDESAV) are enriched in basic and acidic residues.

This sequence belongs to the class-II aminoacyl-tRNA synthetase family. Type 1 subfamily. In terms of assembly, homodimer.

It is found in the cytoplasm. It catalyses the reaction tRNA(Asx) + L-aspartate + ATP = L-aspartyl-tRNA(Asx) + AMP + diphosphate. In terms of biological role, aspartyl-tRNA synthetase with relaxed tRNA specificity since it is able to aspartylate not only its cognate tRNA(Asp) but also tRNA(Asn). Reaction proceeds in two steps: L-aspartate is first activated by ATP to form Asp-AMP and then transferred to the acceptor end of tRNA(Asp/Asn). The sequence is that of Aspartate--tRNA(Asp/Asn) ligase from Corynebacterium diphtheriae (strain ATCC 700971 / NCTC 13129 / Biotype gravis).